A 385-amino-acid chain; its full sequence is MKILVIDIQGLIKQVFVRAFSKDNDVEILNAGFNSLNLINVFLQKFPDLVIIDENTARSNFGNSLNNVLNNISLPVVFIAQNEMLPNFGCLEQSKEKVKLIINKLNFKLTVDLFRSKYLALIKLELKNLGKNKLISSFEVKRIQAPDFSSNSKVELRENNLNDSSIRKSYRVSDVINFAPKNDPDVIIKYQGLINKHKTGKIIVVGSSTGGTEALRIFLRSFKKDSPPIIIVQHMPGGFTKSFAKNLNNEFNIDIKEAEDGDILRPGLVIIANGSYHLIVKYSSGNYFVNLLDGPLVSRHKPSVNVLFRSAAMYAGSNAIGVILTGMGDDGAVCMLEMKKNGAYTIAQDQETSVVFGMPMEAIKIGAVDKILPLSEIADHVLRRS.

At aspartate 53 the chain carries 4-aspartylphosphate. The CheB-type methylesterase domain maps to 196–385; that stretch reads KHKTGKIIVV…EIADHVLRRS (190 aa). Active-site residues include serine 208, histidine 234, and aspartate 330.

This sequence belongs to the CheB family. Phosphorylated by CheA. Phosphorylation of the N-terminal regulatory domain activates the methylesterase activity.

It is found in the cytoplasm. It carries out the reaction [protein]-L-glutamate 5-O-methyl ester + H2O = L-glutamyl-[protein] + methanol + H(+). The enzyme catalyses L-glutaminyl-[protein] + H2O = L-glutamyl-[protein] + NH4(+). Its function is as follows. Involved in chemotaxis. Part of a chemotaxis signal transduction system that modulates chemotaxis in response to various stimuli. Catalyzes the demethylation of specific methylglutamate residues introduced into the chemoreceptors (methyl-accepting chemotaxis proteins or MCP) by CheR. Also mediates the irreversible deamidation of specific glutamine residues to glutamic acid. The polypeptide is Protein-glutamate methylesterase/protein-glutamine glutaminase (Borreliella burgdorferi (strain ATCC 35210 / DSM 4680 / CIP 102532 / B31) (Borrelia burgdorferi)).